We begin with the raw amino-acid sequence, 449 residues long: Endoglucanase A (449 aa).

Positions 1 to 31 (MSTRRTAAALLAAAAVAVGGLTALTTTAAQA) form a signal peptide, tat-type signal. The CBM2 domain maps to 32–137 (APGCRVDYAV…SLNGTTCTGT (106 aa)). Cys35 and Cys134 are disulfide-bonded. Residues 127–170 (FSLNGTTCTGTVPTTSPTPTPTPTTPTPTPTPTPTPTPTVTPQP) form a disordered region. Residues 132-141 (TTCTGTVPTT) show a composition bias toward low complexity. The linker ('hinge') (Pro-Thr box) stretch occupies residues 139-168 (PTTSPTPTPTPTTPTPTPTPTPTPTPTVTP). Over residues 142-167 (SPTPTPTPTTPTPTPTPTPTPTPTVT) the composition is skewed to pro residues. Residue Asp247 is part of the active site. Disulfide bonds link Cys248–Cys291 and Cys390–Cys426. The active-site Proton donor is the Asp283. Catalysis depends on Asp423, which acts as the Nucleophile. A catalytic region spans residues 438–449 (EIALEMARNARW).

This sequence belongs to the glycosyl hydrolase 6 (cellulase B) family. In terms of processing, the linker region (also termed 'hinge') may be a potential site for proteolysis. Predicted to be exported by the Tat system. The position of the signal peptide cleavage has not been experimentally proven.

The catalysed reaction is Endohydrolysis of (1-&gt;4)-beta-D-glucosidic linkages in cellulose, lichenin and cereal beta-D-glucans.. The biological conversion of cellulose to glucose generally requires three types of hydrolytic enzymes: (1) Endoglucanases which cut internal beta-1,4-glucosidic bonds; (2) Exocellobiohydrolases that cut the disaccharide cellobiose from the non-reducing end of the cellulose polymer chain; (3) Beta-1,4-glucosidases which hydrolyze the cellobiose and other short cello-oligosaccharides to glucose. In Cellulomonas fimi, this protein is Endoglucanase A (cenA).